Here is a 2222-residue protein sequence, read N- to C-terminus: MTKNIASDNVPLSRFGVLVAQLESIVASASQKNPDPLLCFEILSDLISAIDEEPKESLLVTQRKCEDALYSLVTLGARRPVRHLASVAMAKIISNGDSISIYSRASSLQGFLSDGKRSDPQRVAGAAQCLGELYRHFGKKITSGLFETTSIVTKLVKFNEDFVRQEAFILLHNALEGCGGTAAATAYSEAYRLITRFSTLDKSFVVRIAAARCLKAFSNIGGPGLGTSEFDTLASYCVKGIEDSESSVRDAFAEALGSLLALGMHPEAHVQPRGKGPFPPAKKLEGGLQRHLILPFTKAVGSRAKNTRFGLALSWVFFLQAIRIRYLDSDSELQDYSLPIMDMLRGDSSIDAHALACVLYILRVGVIDQMMEPSQRSFSVFLGKQLQSSNASPSMKIVALRALSYTLKTLGEVPHEFKEFFDDTVGAALSHFLDLVRVEAALTLRALAEVDPTCVGGLTSFAVTTLNALRESLSFEKGDKLKTDLASLHGQAATLAALVSISPGLSLGYPARLPRSVLEVSKKMLTESRRNVTVASSEKEAGWLLLSSLLNSMPKEEFGDQDFDILILWTDVFAGNPEHLIKQQAELKSMLSVWSAAIDALTAFVRRFVSCNDGILLQPVLANLRSALSCVSTMANKRFSDVKTLVDILIIRILIAYQSIPDPLAYKSEHQQIIQLCTTPYRDPSGFEESSCLKSLLDKRDAWLGPWIPGRDWFEDELRYFQGGEDGLAPSVWESKVSSFPLPETVKKTLVNQMVLCFGIMFASQDSQGMLSLLSVIQQCLKAGKKQQWRTASLTNICAGLLAGLKALHALRPQQLTTEVLSSGQAIFQNILTEGDICASQRRAACEGLGLLARLGNDIFTARMTRVLLGDLSGVTDPNYGGSIALALGCIHHSAGGMALSSLVPATVNSVSSLTKTSVLGLKIWALHGLLLTIEAAGLSFVSHVQAALGLALDILLTEESGWIDLSQGIGRLINAIVAVLGPELSPGSILFSRCKSVIAEISSWQEIPTLLESVCFTQQLILFAPQAVSVHIHVKNLLMTLASRQPIIRRLSVSTLRHLVEKDPVSVIDEQIEDNLFQMLDEETDSEIGNLIRSTLIRLLYATCPSRPSRWMLICRNMALAASAGRSAETSIAENDPAYTRENLGDDDEDMVSSSSGKSIRANPDKDKTLRYRTRVFAAECLSLLPEAVGNDAAHFDILLARNLASNRQSSGDWLVLQLQELISLAYQISTIQFENMRPIGVGLLSTILEKFKLVADPELPGHLLLEQYQAQLLSAVRTALDANSGPVLLEAGLQLATKIMTSGIIRSDQVAVKRIFSLLSRPLNDFNELYYPSFAEWVTSKIKIRLLAAHASLKCYIFTFLRKHHGEVPVEFEALLPMFSKSSDLLGRYWIQVLKGYSYICLCQNLKKSQCSFLDEILPHTVSRRLQPCLEEAWPVILQALVLDAIPVNHSVEEFSDRSLISTHRMVTLEAEDFQFLWGFAVLVLFQGMHPASSMQVIPFSSAKIKSSGDSSINESSFQGLKLYEIALPVFQSLSAGRFFSSGFLSIDLCQELLQVLSYSFHMDSSWDILAVSVVQQISQNCPKDFLESEEFAYSTIELCLGYLFKILHRHNEISPDDGIWDNMLSPLFISIKTLVKRFELKHRLNSAPLAFLLSGYKCIRQVPTDAYLPKALEIVKSTNDLLLELTRASSQKPYTDGTNFAADSGFHLRAIFGACLHMVGDLTRDCINGIQLVDSKRSGLRKLLQLKLVFCLEQLFSLAKLAYEFDCPVDETNTNSICIVMLKSCQISIAAVVKDSNVQVQATVLQVLKSLVQRYNNPEEKSFVILFVGELIGDIVSLMQRALLKPVNTESVVIAGECLRFIMLLQTHSITDELQKGFMSLFLEVVLVVFSKTSDGVSQEVLELRNVAVRLVSHLAQLPSSAVHFKDVLLSLPVTHRQQLQDIIRASVSKDSALAKPKSLVPAMDIKLPAPVVATPEKVTSTANMVKEEALSTMPTSFNQVSTVESGTDEEEEEEEDDDDDDWDTFQSFPASTNLEGSESKTESVAEEEPDLPGRSSIQDDESNAEETDDQHLASDHATDITREDSNDKSKEVVEEETVEPCFTTREDSVDKSKEVEEETVKPCLIEDALTSQNDKTSSGDHPVEINEQSVESKNLESENIGTDIKLASTEVESPALDDLEPQQIQKSPEDESSKEHVGADVIVTEETIAENKSDVDYI.

HEAT repeat units follow at residues 37–75 (LLCFEILSDLISAIDEEPKESLLVTQRKCEDALYSLVTL), 228–265 (SEFDTLASYCVKGIEDSESSVRDAFAEALGSLLALGMH), 331–368 (SELQDYSLPIMDMLRGDSSIDAHALACVLYILRVGVID), 510–540 (PARLPRSVLEVSKKMLTESRRNVTVASSEKE), 541–578 (AGWLLLSSLLNSMPKEEFGDQDFDILILWTDVFAGNPE), 611–648 (CNDGILLQPVLANLRSALSCVSTMANKRFSDVKTLVDI), 768–807 (QGMLSLLSVIQQCLKAGKKQQWRTASLTNICAGLLAGLKA), 898–936 (MALSSLVPATVNSVSSLTKTSVLGLKIWALHGLLLTIEA), 968–1008 (QGIG…WQEI), and 1029–1066 (VSVHIHVKNLLMTLASRQPIIRRLSVSTLRHLVEKDPV). Residues 1133–1165 (IAENDPAYTRENLGDDDEDMVSSSSGKSIRANP) are disordered. HEAT repeat units follow at residues 1238–1269 (MRPIGVGLLSTILEKFKLVADPELPGHLLLEQ), 1270–1306 (YQAQLLSAVRTALDANSGPVLLEAGLQLATKIMTSGI), 1312–1354 (VAVK…AHAS), 1372–1410 (VEFEALLPMFSKSSDLLGRYWIQVLKGYSYICLCQNLKK), 1434–1474 (EAWP…LEAE), 1550–1586 (DLCQELLQVLSYSFHMDSSWDILAVSVVQQISQNCPK), 1783–1820 (VMLKSCQISIAAVVKDSNVQVQATVLQVLKSLVQRYNN), 1836–1874 (GDIVSLMQRALLKPVNTESVVIAGECLRFIMLLQTHSIT), 1880–1917 (GFMSLFLEVVLVVFSKTSDGVSQEVLELRNVAVRLVSH), and 1966–2006 (AMDI…QVST). Positions 1992–2203 (EALSTMPTSF…DESSKEHVGA (212 aa)) are disordered. Polar residues predominate over residues 1996-2009 (TMPTSFNQVSTVES). Over residues 2010–2027 (GTDEEEEEEEDDDDDDWD) the composition is skewed to acidic residues. Over residues 2028–2040 (TFQSFPASTNLEG) the composition is skewed to polar residues. The segment covering 2062-2072 (QDDESNAEETD) has biased composition (acidic residues). Composition is skewed to basic and acidic residues over residues 2073 to 2096 (DQHLASDHATDITREDSNDKSKEV) and 2108 to 2124 (TREDSVDKSKEVEEETV). Positions 2150-2164 (NEQSVESKNLESENI) are enriched in polar residues. The span at 2191 to 2202 (SPEDESSKEHVG) shows a compositional bias: basic and acidic residues.

It belongs to the HEATR5 family.

Its function is as follows. May regulate multiple metabolic, hormonal and stress-related pathways. Required for carbohydrate metabolism and homoeostasis. May also monitor ethylene biosynthesis and senescence. The protein is Protein SWEETIE of Arabidopsis thaliana (Mouse-ear cress).